Here is a 1131-residue protein sequence, read N- to C-terminus: ATP-dependent helicase FUN30 (1131 aa).

The disordered stretch occupies residues 1–70 (MSGSHSNDED…HTSKPLPSGS (70 aa)). Residues 16-36 (PETSSPTKVASSSPLKPTSPT) are compositionally biased toward polar residues. Positions 76–111 (VNLAREFPDFSQTLVQAVFKSNSFNLQSARERLTRL) are CUE-like region. Residues 114-141 (QRQNWTWNKNASPKKSETPPPVKKSLPL) are disordered. Phosphoserine is present on serine 232. Disordered regions lie at residues 242–273 (KYGR…YTES) and 327–350 (NDKD…ANES). A compositionally biased stretch (acidic residues) spans 250–271 (NDEEEEESMMTDDDDASGDDYT). Serine 369 bears the Phosphoserine mark. Residues 400 to 533 (DLMNLGEDDD…GDDDDDDDDE (134 aa)) are disordered. Residues 405–416 (GEDDDDDNDDGN) are compositionally biased toward acidic residues. Over residues 417 to 432 (NDNNNSNNNNTAGADA) the composition is skewed to low complexity. Over residues 433–442 (TSKEKEDTKA) the composition is skewed to basic and acidic residues. Serine 451 carries the post-translational modification Phosphoserine. A compositionally biased stretch (acidic residues) spans 480–533 (EDEDDDVDLEAIDDELPQSEHEDDDYEEEDEDYNDEEEDVEYDDGDDDDDDDDE). Residues 584-752 (NLLYQNKMSC…MSLLEFIMPN (169 aa)) enclose the Helicase ATP-binding domain. An ATP-binding site is contributed by 597-604 (DDMGLGKT). The short motif at 703-706 (DEGH) is the DEGH box element. The region spanning 953–1108 (ALKKLLKTII…EDKKSQDVLE (156 aa)) is the Helicase C-terminal domain.

It belongs to the SNF2/RAD54 helicase family. As to quaternary structure, homodimer.

It localises to the nucleus. Its subcellular location is the chromosome. The enzyme catalyses ATP + H2O = ADP + phosphate + H(+). In terms of biological role, DNA helicase that possesses intrinsic ATP-dependent nucleosome-remodeling activity and is both required for DNA repair and heterochromatin organization. Promotes DNA end resection of double-strand breaks (DSBs) following DNA damage: probably acts by weakening histone DNA interactions in nucleosomes flanking DSBs, facilitating single-stranded DNA (ssDNA) production by the EXO1 and SGS1 machinery. Promotes gene silencing at heterochromatin by regulating the chromatin structure within or around silent loci. Also required for heterochromatin organization at centromeres. The chain is ATP-dependent helicase FUN30 (FUN30) from Saccharomyces cerevisiae (strain ATCC 204508 / S288c) (Baker's yeast).